The following is a 120-amino-acid chain: uncharacterized protein (120 aa).

To B.subtilis XkdH.

This is an uncharacterized protein from Bacillus subtilis (strain 168).